Consider the following 85-residue polypeptide: Translational regulator CsrA (85 aa).

It belongs to the CsrA/RsmA family. As to quaternary structure, homodimer; the beta-strands of each monomer intercalate to form a hydrophobic core, while the alpha-helices form wings that extend away from the core.

Its subcellular location is the cytoplasm. Its function is as follows. A translational regulator that binds mRNA to regulate translation initiation and/or mRNA stability. Usually binds in the 5'-UTR at or near the Shine-Dalgarno sequence preventing ribosome-binding, thus repressing translation. Its main target seems to be the major flagellin gene, while its function is anatagonized by FliW. The protein is Translational regulator CsrA of Leifsonia xyli subsp. xyli (strain CTCB07).